A 207-amino-acid polypeptide reads, in one-letter code: Outer-membrane lipoprotein LolB (207 aa).

The first 21 residues, 1–21, serve as a signal peptide directing secretion; sequence MPLPDFRLIRLLPLAALVLTA. Residue Cys22 is the site of N-palmitoyl cysteine attachment. Cys22 carries the S-diacylglycerol cysteine lipid modification.

This sequence belongs to the LolB family. As to quaternary structure, monomer.

It is found in the cell outer membrane. Functionally, plays a critical role in the incorporation of lipoproteins in the outer membrane after they are released by the LolA protein. In Escherichia coli (strain SMS-3-5 / SECEC), this protein is Outer-membrane lipoprotein LolB.